The primary structure comprises 140 residues: Pro-vaccinia growth factor (140 aa).

The signal sequence occupies residues 1–18; that stretch reads MLINYLMLLFAAMIIRSF. At 19–100 the chain is on the extracellular side; sequence ADSGNAIETT…SEKPNTTTSY (82 aa). N34 carries an N-linked (GlcNAc...) asparagine; by host glycan. Positions 41-81 constitute an EGF-like domain; that stretch reads AIRLCGPEGDGYCLHGDCIHARDIDGMYCRCSHGYTGIRCQ. 3 cysteine pairs are disulfide-bonded: C45–C58, C53–C69, and C71–C80. N95 carries N-linked (GlcNAc...) asparagine; by host glycosylation. A helical membrane pass occupies residues 101–121; sequence IPSPGIMLVLVGIIIITCCLL. The Cytoplasmic portion of the chain corresponds to 122-140; sequence SVYRFTRRTKLPLQDMVVP.

This sequence belongs to the orthopoxvirus OPG019 family. As to quaternary structure, vaccinia growth factor interacts with host EGFR and promotes EGFR dimerization.

Its subcellular location is the host membrane. It localises to the secreted. Stimulates cellular proliferation (hyperplasia)and mobility around infected cells to promote rapid and efficient spread of infection. This effect is beneficial for virus replication in vivo, because poxviruses replicate possibly better in proliferating cells than in quiescent cells. Acts by binding host EGFR, inducing its dimerization, autophosphorylation and leading to activation of several cellular pathways regulating cell proliferation or cell survival. The activation by host EGFR of mitogen activated protein kinases (MAPK) and extracellular-signal regulated kinases (ERK) are essential for the positive effect of vaccinia growth factor on poxvirus virulence in vivo. The sequence is that of Pro-vaccinia growth factor (OPG019) from Homo sapiens (Human).